The chain runs to 218 residues: N-(5'-phosphoribosyl)anthranilate isomerase (218 aa).

Belongs to the TrpF family.

It carries out the reaction N-(5-phospho-beta-D-ribosyl)anthranilate = 1-(2-carboxyphenylamino)-1-deoxy-D-ribulose 5-phosphate. It participates in amino-acid biosynthesis; L-tryptophan biosynthesis; L-tryptophan from chorismate: step 3/5. This Rhodopseudomonas palustris (strain HaA2) protein is N-(5'-phosphoribosyl)anthranilate isomerase.